Here is a 449-residue protein sequence, read N- to C-terminus: Asparagine--tRNA ligase (449 aa).

Belongs to the class-II aminoacyl-tRNA synthetase family. Homodimer.

It is found in the cytoplasm. The enzyme catalyses tRNA(Asn) + L-asparagine + ATP = L-asparaginyl-tRNA(Asn) + AMP + diphosphate + H(+). In Mesomycoplasma hyopneumoniae (strain J / ATCC 25934 / NCTC 10110) (Mycoplasma hyopneumoniae), this protein is Asparagine--tRNA ligase.